We begin with the raw amino-acid sequence, 363 residues long: Phosphoserine aminotransferase (363 aa).

Position 42 (arginine 42) interacts with L-glutamate. Residues tryptophan 105, threonine 155, aspartate 175, and glutamine 198 each contribute to the pyridoxal 5'-phosphate site. At lysine 199 the chain carries N6-(pyridoxal phosphate)lysine. 240-241 (NT) is a binding site for pyridoxal 5'-phosphate.

Belongs to the class-V pyridoxal-phosphate-dependent aminotransferase family. SerC subfamily. Homodimer. Pyridoxal 5'-phosphate is required as a cofactor.

Its subcellular location is the cytoplasm. The catalysed reaction is O-phospho-L-serine + 2-oxoglutarate = 3-phosphooxypyruvate + L-glutamate. The enzyme catalyses 4-(phosphooxy)-L-threonine + 2-oxoglutarate = (R)-3-hydroxy-2-oxo-4-phosphooxybutanoate + L-glutamate. Its pathway is amino-acid biosynthesis; L-serine biosynthesis; L-serine from 3-phospho-D-glycerate: step 2/3. The protein operates within cofactor biosynthesis; pyridoxine 5'-phosphate biosynthesis; pyridoxine 5'-phosphate from D-erythrose 4-phosphate: step 3/5. Catalyzes the reversible conversion of 3-phosphohydroxypyruvate to phosphoserine and of 3-hydroxy-2-oxo-4-phosphonooxybutanoate to phosphohydroxythreonine. This chain is Phosphoserine aminotransferase, found in Janthinobacterium sp. (strain Marseille) (Minibacterium massiliensis).